A 289-amino-acid chain; its full sequence is Heme oxygenase 1, chloroplastic (289 aa).

Residues 1-64 constitute a chloroplast transit peptide; it reads MAPAAASLTA…SASSSRRMVV (64 aa). His96 serves as a coordination point for heme b.

Belongs to the heme oxygenase family.

The protein resides in the plastid. The protein localises to the chloroplast. The catalysed reaction is heme b + 3 reduced [NADPH--hemoprotein reductase] + 3 O2 = biliverdin IXalpha + CO + Fe(2+) + 3 oxidized [NADPH--hemoprotein reductase] + 3 H2O + H(+). In terms of biological role, catalyzes the opening of the heme ring to form the open-chain tetrapyrrole biliverdin IX with the release of iron and carbon monoxide (CO). Is a key enzyme in the synthesis of the chromophore of the phytochrome family of plant photoreceptors. Essential for photoperiod response and repression of flowering through cytochromes that inhibit flowering by affecting both HD1 and EHD1 flowering pathways. The polypeptide is Heme oxygenase 1, chloroplastic (HO1) (Oryza sativa subsp. japonica (Rice)).